Here is a 613-residue protein sequence, read N- to C-terminus: Chaperone protein dnaK (613 aa).

This sequence belongs to the heat shock protein 70 family.

Its subcellular location is the plastid. It is found in the chloroplast. Acts as a chaperone. This chain is Chaperone protein dnaK, found in Phaeodactylum tricornutum (strain CCAP 1055/1).